A 494-amino-acid polypeptide reads, in one-letter code: UDP-N-acetylmuramoyl-L-alanyl-D-glutamate--L-lysine ligase (494 aa).

A UDP-N-acetyl-alpha-D-muramoyl-L-alanyl-D-glutamate-binding site is contributed by serine 30. 110 to 116 (GTNGKTS) is an ATP binding site. UDP-N-acetyl-alpha-D-muramoyl-L-alanyl-D-glutamate-binding positions include 152 to 153 (TT), serine 179, and arginine 187. An N6-carboxylysine modification is found at lysine 219. The short motif at 406 to 409 (DNPA) is the L-lysine recognition motif element.

It belongs to the MurCDEF family. MurE subfamily. In terms of processing, carboxylation is probably crucial for Mg(2+) binding and, consequently, for the gamma-phosphate positioning of ATP.

It is found in the cytoplasm. It carries out the reaction UDP-N-acetyl-alpha-D-muramoyl-L-alanyl-D-glutamate + L-lysine + ATP = UDP-N-acetyl-alpha-D-muramoyl-L-alanyl-gamma-D-glutamyl-L-lysine + ADP + phosphate + H(+). The protein operates within cell wall biogenesis; peptidoglycan biosynthesis. Catalyzes the addition of L-lysine to the nucleotide precursor UDP-N-acetylmuramoyl-L-alanyl-D-glutamate (UMAG) in the biosynthesis of bacterial cell-wall peptidoglycan. The chain is UDP-N-acetylmuramoyl-L-alanyl-D-glutamate--L-lysine ligase from Staphylococcus aureus (strain MW2).